The chain runs to 863 residues: Cilia- and flagella-associated protein 58 (863 aa).

2 coiled-coil regions span residues 107 to 600 (TVKE…NERD) and 631 to 815 (QSQY…KQVF). The interval 836 to 863 (GPSLLDQLPGGSGTGSGGMATGGGVGMS) is disordered. A compositionally biased stretch (gly residues) spans 845–863 (GGSGTGSGGMATGGGVGMS).

This sequence belongs to the CFAP58 family.

The protein resides in the cell projection. It localises to the cilium. Its subcellular location is the flagellum. This is Cilia- and flagella-associated protein 58 from Chlamydomonas reinhardtii (Chlamydomonas smithii).